Reading from the N-terminus, the 31-residue chain is Monocyclic monoterpene ketone monooxygenase (31 aa).

20-25 (GAGFXG) lines the FAD pocket.

Monomer. FAD is required as a cofactor.

The enzyme catalyses 1-hydroxylimonen-2-one + NADPH + O2 = 3-isopropenyl-6-oxoheptanoate + NADP(+) + H2O. It catalyses the reaction (1R,4S)-1-hydroxylimonen-2-one + NADPH + O2 + H(+) = (4S,7S)-7-hydroxy-4-isopropenyl-7-methyloxepan-2-one + NADP(+) + H2O. The catalysed reaction is (1S,4R)-1-hydroxylimonen-2-one + NADPH + O2 + H(+) = (4R,7R)-7-hydroxy-4-isopropenyl-7-methyloxepan-2-one + NADP(+) + H2O. It carries out the reaction (1R,4R)-dihydrocarvone + NADPH + O2 + H(+) = (4R,7R)-4-isopropenyl-7-methyloxepan-2-one + NADP(+) + H2O. The enzyme catalyses (1S,4R)-menthone + NADPH + O2 + H(+) = (4S,7R)-7-isopropyl-4-methyloxepan-2-one + NADP(+) + H2O. It catalyses the reaction (1R,4S)-menthone + NADPH + O2 + H(+) = (4R,7S)-7-isopropyl-4-methyloxepan-2-one + NADP(+) + H2O. The catalysed reaction is (1S,4R)-isodihydrocarvone + NADPH + O2 + H(+) = (3S,6R)-6-isopropenyl-3-methyloxepan-2-one + NADP(+) + H2O. It participates in terpene metabolism; monoterpene degradation. Functionally, catalyzes the NADPH- and oxygen-dependent oxidation of the monocyclic monoterpene ketones 1-hydroxy-2-oxolimonene, dihydrocarvone and menthone. Is able to convert all enantiomers of these natural substrates with almost equal efficiency. Is thus involved in the conversion of the monocyclic monoterpene ketone intermediates formed in the degradation pathways of all stereoisomers of three different monocyclic monoterpenes, i.e. limonene, (dihydro)carveol and menthol, which likely make R.erythropolis able to grow on these compounds as the sole source of carbon and energy. The chain is Monocyclic monoterpene ketone monooxygenase from Rhodococcus erythropolis (Arthrobacter picolinophilus).